A 259-amino-acid polypeptide reads, in one-letter code: 3-deoxy-manno-octulosonate cytidylyltransferase (259 aa).

It belongs to the KdsB family.

Its subcellular location is the cytoplasm. The enzyme catalyses 3-deoxy-alpha-D-manno-oct-2-ulosonate + CTP = CMP-3-deoxy-beta-D-manno-octulosonate + diphosphate. Its pathway is nucleotide-sugar biosynthesis; CMP-3-deoxy-D-manno-octulosonate biosynthesis; CMP-3-deoxy-D-manno-octulosonate from 3-deoxy-D-manno-octulosonate and CTP: step 1/1. It participates in bacterial outer membrane biogenesis; lipopolysaccharide biosynthesis. Its function is as follows. Activates KDO (a required 8-carbon sugar) for incorporation into bacterial lipopolysaccharide in Gram-negative bacteria. The chain is 3-deoxy-manno-octulosonate cytidylyltransferase from Protochlamydia amoebophila (strain UWE25).